A 113-amino-acid chain; its full sequence is U11-theraphotoxin-Hhn1f (113 aa).

An N-terminal signal peptide occupies residues 1 to 21 (MNTVRVTFLLVFVLAVSLGQA). Residues 22-74 (DKDENRMEMQEKTEQGKSYLDFAENLLLQKLEELEAKLLEEDSKESRNSRQKR) constitute a propeptide that is removed on maturation. A disordered region spans residues 61–82 (EEDSKESRNSRQKRCIGEGVPC). Cystine bridges form between C75/C90, C82/C95, and C89/C110.

The protein belongs to the neurotoxin 14 (magi-1) family. 01 (HNTX-16) subfamily. As to expression, expressed by the venom gland.

Its subcellular location is the secreted. Its function is as follows. Probable ion channel inhibitor. This chain is U11-theraphotoxin-Hhn1f, found in Cyriopagopus hainanus (Chinese bird spider).